A 570-amino-acid polypeptide reads, in one-letter code: Interleukin-1 receptor accessory protein (570 aa).

The N-terminal stretch at 1–20 (MTLLWCVVSLYFYGILQSDA) is a signal peptide. Ig-like C2-type domains follow at residues 21-128 (SERC…VAFP), 141-230 (PMKL…RTLT), and 242-348 (PPVI…AKVK). Residues 21–367 (SERCDDWGLD…VELACGFGAT (347 aa)) lie on the Extracellular side of the membrane. 5 disulfides stabilise this stretch: cysteine 24–cysteine 122, cysteine 47–cysteine 114, cysteine 137–cysteine 181, cysteine 160–cysteine 212, and cysteine 266–cysteine 332. Asparagine 57 is a glycosylation site (N-linked (GlcNAc...) asparagine). The interval 69-85 (IWYWTRQDRDLEEPINF) is essential for interaction with PTPRD. N-linked (GlcNAc...) asparagine glycans are attached at residues asparagine 107, asparagine 111, and asparagine 118. Asparagine 196, asparagine 209, and asparagine 299 each carry an N-linked (GlcNAc...) asparagine glycan. The chain crosses the membrane as a helical span at residues 368-388 (VLLVVILIVVYHVYWLEMVLF). The Cytoplasmic portion of the chain corresponds to 389 to 570 (YRAHFGTDET…GLSYSSLKNV (182 aa)). In terms of domain architecture, TIR spans 403-546 (KEYDIYVSYA…RFWKQLQVAM (144 aa)). Residue glutamate 482 is part of the active site. Residues 549 to 570 (KKSPRRSSSDEQGLSYSSLKNV) form a disordered region. At serine 557 the chain carries Phosphoserine. Residues 558-570 (DEQGLSYSSLKNV) show a composition bias toward polar residues.

Belongs to the interleukin-1 receptor family. As to quaternary structure, the interleukin-36 receptor complex is a heterodimer of IL1RL2 and IL1RAP; the association is inhibited by IL36RN. The interleukin-1 receptor complex is a heterodimer of IL1R1 and IL1RAP. Associates with IL1R2 to form a non-signaling interleukin-1 receptor complex. Isoform 4 interacts with IL1R1 in an interleukin-1-dependent manner. Interacts with IL-33-bound IL1RL1 to form the minimal interleukin-33 signaling complex with a 1:1:1 stoichiometry. Interacts with KIT (independently of stimulation with KITLG/SCF). A mast cell-specific KITLG/SCF-induced interleukin-33 signaling complex contains IL1RL1, IL1RAP, KIT and MYD88. Interacts (via the first immunoglobilin domain) with PTPRD (via the third immunoglobilin domain); induces pre- and postsynaptic differentiation of neurons. In terms of tissue distribution, detected in liver, skin, placenta, thymus and lung. Isoform 4 is predominantly expressed in brain. Overexpressed on candidate chronic myeloid leukemia (CML) stem cells, hematopoietic stem cells and mononuclear cells of patients with acute myeloid leukemia (AML). Overexpressed in patients with chronic obstructive pulmonary disease (COPD). Expressed in T-helper 1 (Th1) and T-helper 2 (Th2) cell subsets.

The protein resides in the cell membrane. It localises to the secreted. It carries out the reaction NAD(+) + H2O = ADP-D-ribose + nicotinamide + H(+). Functionally, coreceptor for IL1RL2 in the IL-36 signaling system. Coreceptor with IL1R1 in the IL-1 signaling system. Associates with IL1R1 bound to IL1B to form the high affinity interleukin-1 receptor complex which mediates interleukin-1-dependent activation of NF-kappa-B and other pathways. Signaling involves the recruitment of adapter molecules such as TOLLIP, MYD88, and IRAK1 or IRAK2 via the respective TIR domains of the receptor/coreceptor subunits. Recruits TOLLIP to the signaling complex. Does not bind to interleukin-1 alone; binding of IL1RN to IL1R1, prevents its association with IL1R1 to form a signaling complex. The cellular response is modulated through a non-signaling association with the membrane IL1R2 decoy receptor. Coreceptor for IL1RL1 in the IL-33 signaling system. Can bidirectionally induce pre- and postsynaptic differentiation of neurons by trans-synaptically binding to PTPRD. May play a role in IL1B-mediated costimulation of IFNG production from T-helper 1 (Th1) cells. Associates with secreted ligand-bound IL1R2 and increases the affinity of secreted IL1R2 for IL1B; this complex formation may be the dominant mechanism for neutralization of IL1B by secreted/soluble receptors. Enhances the ability of secreted IL1R1 to inhibit IL-33 signaling. Its function is as follows. Unable to mediate canonical IL-1 signaling. Required for Src phosphorylation by IL1B. May be involved in IL1B-potentiated NMDA-induced calcium influx in neurons. The protein is Interleukin-1 receptor accessory protein (IL1RAP) of Homo sapiens (Human).